A 209-amino-acid polypeptide reads, in one-letter code: Thiamine-phosphate synthase 1 (209 aa).

4-amino-2-methyl-5-(diphosphooxymethyl)pyrimidine is bound by residues 39–43 and N74; that span reads QFREK. Residues D75 and D94 each coordinate Mg(2+). S112 contacts 4-amino-2-methyl-5-(diphosphooxymethyl)pyrimidine. Position 138–140 (138–140) interacts with 2-[(2R,5Z)-2-carboxy-4-methylthiazol-5(2H)-ylidene]ethyl phosphate; the sequence is TQS. K141 serves as a coordination point for 4-amino-2-methyl-5-(diphosphooxymethyl)pyrimidine. Residues G170 and 190–191 each bind 2-[(2R,5Z)-2-carboxy-4-methylthiazol-5(2H)-ylidene]ethyl phosphate; that span reads IS.

The protein belongs to the thiamine-phosphate synthase family. Mg(2+) serves as cofactor.

It carries out the reaction 2-[(2R,5Z)-2-carboxy-4-methylthiazol-5(2H)-ylidene]ethyl phosphate + 4-amino-2-methyl-5-(diphosphooxymethyl)pyrimidine + 2 H(+) = thiamine phosphate + CO2 + diphosphate. It catalyses the reaction 2-(2-carboxy-4-methylthiazol-5-yl)ethyl phosphate + 4-amino-2-methyl-5-(diphosphooxymethyl)pyrimidine + 2 H(+) = thiamine phosphate + CO2 + diphosphate. The catalysed reaction is 4-methyl-5-(2-phosphooxyethyl)-thiazole + 4-amino-2-methyl-5-(diphosphooxymethyl)pyrimidine + H(+) = thiamine phosphate + diphosphate. Its pathway is cofactor biosynthesis; thiamine diphosphate biosynthesis; thiamine phosphate from 4-amino-2-methyl-5-diphosphomethylpyrimidine and 4-methyl-5-(2-phosphoethyl)-thiazole: step 1/1. Condenses 4-methyl-5-(beta-hydroxyethyl)thiazole monophosphate (THZ-P) and 2-methyl-4-amino-5-hydroxymethyl pyrimidine pyrophosphate (HMP-PP) to form thiamine monophosphate (TMP). The chain is Thiamine-phosphate synthase 1 from Streptococcus pneumoniae (strain ATCC BAA-255 / R6).